Here is a 231-residue protein sequence, read N- to C-terminus: Large ribosomal subunit protein uL1 (231 aa).

Belongs to the universal ribosomal protein uL1 family. Part of the 50S ribosomal subunit.

Functionally, binds directly to 23S rRNA. The L1 stalk is quite mobile in the ribosome, and is involved in E site tRNA release. Its function is as follows. Protein L1 is also a translational repressor protein, it controls the translation of the L11 operon by binding to its mRNA. The chain is Large ribosomal subunit protein uL1 from Verminephrobacter eiseniae (strain EF01-2).